Here is a 440-residue protein sequence, read N- to C-terminus: uncharacterized protein (440 aa).

The first 19 residues, 1–19 (MKKLLLAASIVYFASACLA), serve as a signal peptide directing secretion.

This is an uncharacterized protein from Rickettsia prowazekii (strain Madrid E).